Consider the following 101-residue polypeptide: Ribonuclease kappa-B (101 aa).

The next 2 helical transmembrane spans lie at 13 to 33 (ACGI…GIFF) and 68 to 88 (VGIN…VSLC).

This sequence belongs to the RNase K family.

The protein localises to the membrane. In terms of biological role, endoribonuclease which preferentially cleaves ApU and ApG phosphodiester bonds. The polypeptide is Ribonuclease kappa-B (rnasekb) (Danio rerio (Zebrafish)).